Here is a 357-residue protein sequence, read N- to C-terminus: DNA replication and repair protein RecF (357 aa).

30 to 37 contributes to the ATP binding site; it reads GANGSGKT.

The protein belongs to the RecF family.

It localises to the cytoplasm. Functionally, the RecF protein is involved in DNA metabolism; it is required for DNA replication and normal SOS inducibility. RecF binds preferentially to single-stranded, linear DNA. It also seems to bind ATP. This Escherichia fergusonii (strain ATCC 35469 / DSM 13698 / CCUG 18766 / IAM 14443 / JCM 21226 / LMG 7866 / NBRC 102419 / NCTC 12128 / CDC 0568-73) protein is DNA replication and repair protein RecF.